A 631-amino-acid polypeptide reads, in one-letter code: Phosphomethylpyrimidine synthase (631 aa).

Substrate contacts are provided by residues Asn-239, Met-268, Tyr-297, His-333, 353–355 (SRG), 394–397 (DGLR), and Glu-433. His-437 is a binding site for Zn(2+). A substrate-binding site is contributed by Tyr-460. His-501 contributes to the Zn(2+) binding site. Residues Cys-581, Cys-584, and Cys-589 each contribute to the [4Fe-4S] cluster site.

Belongs to the ThiC family. As to quaternary structure, homodimer. It depends on [4Fe-4S] cluster as a cofactor.

The catalysed reaction is 5-amino-1-(5-phospho-beta-D-ribosyl)imidazole + S-adenosyl-L-methionine = 4-amino-2-methyl-5-(phosphooxymethyl)pyrimidine + CO + 5'-deoxyadenosine + formate + L-methionine + 3 H(+). It functions in the pathway cofactor biosynthesis; thiamine diphosphate biosynthesis. Its function is as follows. Catalyzes the synthesis of the hydroxymethylpyrimidine phosphate (HMP-P) moiety of thiamine from aminoimidazole ribotide (AIR) in a radical S-adenosyl-L-methionine (SAM)-dependent reaction. This Salmonella paratyphi B (strain ATCC BAA-1250 / SPB7) protein is Phosphomethylpyrimidine synthase.